A 404-amino-acid polypeptide reads, in one-letter code: Glucose-1-phosphate adenylyltransferase (404 aa).

Alpha-D-glucose 1-phosphate-binding positions include Tyr-99, Gly-164, 179 to 180 (EK), and Ser-197.

This sequence belongs to the bacterial/plant glucose-1-phosphate adenylyltransferase family.

It catalyses the reaction alpha-D-glucose 1-phosphate + ATP + H(+) = ADP-alpha-D-glucose + diphosphate. It functions in the pathway capsule biogenesis; capsule polysaccharide biosynthesis. It participates in glycan biosynthesis; glycogen biosynthesis. Functionally, involved in the biosynthesis of ADP-glucose, a building block, required in the biosynthesis of maltose-1-phosphate (M1P) and in the elongation reactions to produce linear alpha-1,4-glucans. Catalyzes the reaction between ATP and alpha-D-glucose 1-phosphate (G1P) to produce pyrophosphate and ADP-Glc. The chain is Glucose-1-phosphate adenylyltransferase from Mycobacteroides abscessus (strain ATCC 19977 / DSM 44196 / CCUG 20993 / CIP 104536 / JCM 13569 / NCTC 13031 / TMC 1543 / L948) (Mycobacterium abscessus).